We begin with the raw amino-acid sequence, 240 residues long: Pyridoxine 5'-phosphate synthase (240 aa).

Asparagine 6 serves as a coordination point for 3-amino-2-oxopropyl phosphate. A 1-deoxy-D-xylulose 5-phosphate-binding site is contributed by 8–9 (DH). Arginine 17 is a 3-amino-2-oxopropyl phosphate binding site. The active-site Proton acceptor is the histidine 42. Positions 44 and 49 each coordinate 1-deoxy-D-xylulose 5-phosphate. Glutamate 69 (proton acceptor) is an active-site residue. Residue threonine 99 coordinates 1-deoxy-D-xylulose 5-phosphate. The active-site Proton donor is the histidine 190. 3-amino-2-oxopropyl phosphate contacts are provided by residues glycine 191 and 212 to 213 (GH).

This sequence belongs to the PNP synthase family. In terms of assembly, homooctamer; tetramer of dimers.

It is found in the cytoplasm. It carries out the reaction 3-amino-2-oxopropyl phosphate + 1-deoxy-D-xylulose 5-phosphate = pyridoxine 5'-phosphate + phosphate + 2 H2O + H(+). The protein operates within cofactor biosynthesis; pyridoxine 5'-phosphate biosynthesis; pyridoxine 5'-phosphate from D-erythrose 4-phosphate: step 5/5. In terms of biological role, catalyzes the complicated ring closure reaction between the two acyclic compounds 1-deoxy-D-xylulose-5-phosphate (DXP) and 3-amino-2-oxopropyl phosphate (1-amino-acetone-3-phosphate or AAP) to form pyridoxine 5'-phosphate (PNP) and inorganic phosphate. The chain is Pyridoxine 5'-phosphate synthase from Pseudomonas entomophila (strain L48).